A 337-amino-acid chain; its full sequence is DNA-directed RNA polymerase subunit alpha (337 aa).

Residues 1-233 (MIREKVTVST…DLFIPFLHME (233 aa)) form an alpha N-terminal domain (alpha-NTD) region. The tract at residues 266-337 (KLALKSIFID…FAIDLPKNQF (72 aa)) is alpha C-terminal domain (alpha-CTD).

This sequence belongs to the RNA polymerase alpha chain family. As to quaternary structure, in plastids the minimal PEP RNA polymerase catalytic core is composed of four subunits: alpha, beta, beta', and beta''. When a (nuclear-encoded) sigma factor is associated with the core the holoenzyme is formed, which can initiate transcription.

The protein localises to the plastid. The protein resides in the chloroplast. The enzyme catalyses RNA(n) + a ribonucleoside 5'-triphosphate = RNA(n+1) + diphosphate. In terms of biological role, DNA-dependent RNA polymerase catalyzes the transcription of DNA into RNA using the four ribonucleoside triphosphates as substrates. This Ipomoea purpurea (Common morning glory) protein is DNA-directed RNA polymerase subunit alpha.